Reading from the N-terminus, the 52-residue chain is Large ribosomal subunit protein eL39 (52 aa).

It belongs to the eukaryotic ribosomal protein eL39 family.

This chain is Large ribosomal subunit protein eL39, found in Desulfurococcus amylolyticus (strain DSM 18924 / JCM 16383 / VKM B-2413 / 1221n) (Desulfurococcus kamchatkensis).